The primary structure comprises 171 residues: MNLKDHIRGIPDFPKPGILFYDISTLIRHADAWQVAMGRLAKVVRAHHPDLLAGVESRGFILAAPLALKLGCGFIMLRKRGKLPGATVGYDYDLEYGQDRIEIQADAVQPGQRVVVVDDLLATGGTMAAGIKLLRKVGAEVPAAAALIELAFLKGRDRLDVPFEALVSYDQ.

The protein belongs to the purine/pyrimidine phosphoribosyltransferase family. In terms of assembly, homodimer.

It is found in the cytoplasm. The catalysed reaction is AMP + diphosphate = 5-phospho-alpha-D-ribose 1-diphosphate + adenine. It functions in the pathway purine metabolism; AMP biosynthesis via salvage pathway; AMP from adenine: step 1/1. Functionally, catalyzes a salvage reaction resulting in the formation of AMP, that is energically less costly than de novo synthesis. The chain is Adenine phosphoribosyltransferase from Acidiphilium cryptum (strain JF-5).